Here is a 492-residue protein sequence, read N- to C-terminus: Protein nucleotidyltransferase YdiU (492 aa).

8 residues coordinate ATP: G90, G92, R93, K113, D125, G126, R176, and R183. D252 serves as the catalytic Proton acceptor. Positions 253 and 262 each coordinate Mg(2+). Position 262 (D262) interacts with ATP.

The protein belongs to the SELO family. Requires Mg(2+) as cofactor. The cofactor is Mn(2+).

It catalyses the reaction L-seryl-[protein] + ATP = 3-O-(5'-adenylyl)-L-seryl-[protein] + diphosphate. The catalysed reaction is L-threonyl-[protein] + ATP = 3-O-(5'-adenylyl)-L-threonyl-[protein] + diphosphate. It carries out the reaction L-tyrosyl-[protein] + ATP = O-(5'-adenylyl)-L-tyrosyl-[protein] + diphosphate. The enzyme catalyses L-histidyl-[protein] + UTP = N(tele)-(5'-uridylyl)-L-histidyl-[protein] + diphosphate. It catalyses the reaction L-seryl-[protein] + UTP = O-(5'-uridylyl)-L-seryl-[protein] + diphosphate. The catalysed reaction is L-tyrosyl-[protein] + UTP = O-(5'-uridylyl)-L-tyrosyl-[protein] + diphosphate. Functionally, nucleotidyltransferase involved in the post-translational modification of proteins. It can catalyze the addition of adenosine monophosphate (AMP) or uridine monophosphate (UMP) to a protein, resulting in modifications known as AMPylation and UMPylation. The chain is Protein nucleotidyltransferase YdiU from Thioalkalivibrio sulfidiphilus (strain HL-EbGR7).